The following is a 332-amino-acid chain: FAD-dependent monooxygenase elcE (332 aa).

The protein belongs to the oxygen-dependent FAD-linked oxidoreductase family.

Its pathway is secondary metabolite biosynthesis. Functionally, FAD-dependent monooxygenase; part of the gene cluster that mediates the biosynthesis of elsinochrome C, a perelyenequinone phytotoxin structurally similar to cercosporin. The first step of elsinochrome C biosynthesis is performed by the polyketide synthase elcA which catalyzes the formation of nor-toralactone. The starter unit acyltransferase (SAT) domain of elcA initiates polyketide extension by the selective utilization of acetyl-CoA, which is elongated to the heptaketide in the beta-ketoacyl synthase (KS) domain by successive condensations with six malonyl units introduced by the malonyl acyltransferase (MAT) domain. The product template (PT) domain catalyzes C4-C9 and C2-C11 aldol cyclizations and dehydrations to a trihydroxynaphthalene, which is thought to be delivered to the thioesterase (TE) domain for product release. The bifunctional enzyme elcB then methylates nor-toralactone to toralactone before conducting an unusual oxidative aromatic ring opening. The next step in perylenequinone biosynthesis is an O-methylation at the nascent OH-6 of the elcB product performed by the O-methyltransferase elcD. The oxidative coupling of the two monomeric naphthol units in perylenequinone biosynthesis is catalyzed by the FAD-dependent monooxygenase elcE and the multicopper oxidase elcG. ElcG might catalyze the first intermolecular coupling in a regio- and stereo-selective manner via a phenol radical coupling mechanism and the elcE could forge the second C-C bond intramolecularly via a hydride transfer mechanism. The fasciclin domain-containing protein elcF might also play a role duting this step. The last piece of the puzzle in the biosynthesis of elsinochrome C is the additional annulation by enolate coupling to afford the dihydrobenzo(ghi)perylenequinone system, catalyzed by the FAD-dependent monooxygenase elcH. The chain is FAD-dependent monooxygenase elcE from Phaeosphaeria nodorum (strain SN15 / ATCC MYA-4574 / FGSC 10173) (Glume blotch fungus).